Reading from the N-terminus, the 169-residue chain is Small ribosomal subunit protein bS16 (169 aa).

A disordered region spans residues alanine 114 to glutamate 169. Residues alanine 129–alanine 156 are compositionally biased toward basic and acidic residues. The span at alanine 159 to glutamate 169 shows a compositional bias: acidic residues.

The protein belongs to the bacterial ribosomal protein bS16 family.

The polypeptide is Small ribosomal subunit protein bS16 (Corynebacterium urealyticum (strain ATCC 43042 / DSM 7109)).